Here is a 189-residue protein sequence, read N- to C-terminus: Putative manganese efflux pump MntP (189 aa).

6 consecutive transmembrane segments (helical) span residues 3–23, 41–61, 62–82, 103–123, 132–152, and 167–187; these read IVST…AAVS, MIFG…GRVA, ADYV…FLGI, SFIL…SVGV, IVPV…AGVM, and IIGG…HLYG.

It belongs to the MntP (TC 9.B.29) family.

The protein resides in the cell inner membrane. Its function is as follows. Probably functions as a manganese efflux pump. This chain is Putative manganese efflux pump MntP, found in Methylobacillus flagellatus (strain ATCC 51484 / DSM 6875 / VKM B-1610 / KT).